Consider the following 224-residue polypeptide: Heme response regulator HssR (224 aa).

In terms of domain architecture, Response regulatory spans 3–116 (QCLVVDDDSR…ELIFRIRAVL (114 aa)). Aspartate 52 is modified (4-aspartylphosphate). Positions 124-222 (NSEMTIGNLT…VRGQGYKVEN (99 aa)) form a DNA-binding region, ompR/PhoB-type.

Phosphorylated by HssS.

It localises to the cytoplasm. Member of the two-component regulatory system HssS/HssR involved in intracellular heme homeostasis and tempering of staphylococcal virulence. Phosphorylated HssR binds to a direct repeat sequence within hrtAB promoter and activates the expression of hrtAB, an efflux pump, in response to extracellular heme, hemin, hemoglobin or blood. The polypeptide is Heme response regulator HssR (hssR) (Staphylococcus aureus (strain bovine RF122 / ET3-1)).